The following is a 169-amino-acid chain: Caltractin (169 aa).

The segment at 1-24 (MSYRKTVVSARRDQKKGRVGGLTE) is disordered. EF-hand domains follow at residues 25-60 (EQKQ…LGFE), 61-96 (PKKE…KMGE), 98-133 (DSRE…LGEN), and 134-169 (LTDE…TSLF). Ca(2+)-binding residues include Asp-38, Asp-40, Ser-42, Thr-44, and Glu-49. Residues Asp-147, Asn-149, Asp-151, Gln-153, and Glu-158 each contribute to the Ca(2+) site.

The protein belongs to the centrin family.

In terms of biological role, this calcium-binding protein is found in the basal body complexes (the functional homolog of the centrosome in animal cell). In mitotic cells it is specifically associated with the poles of the mitotic spindles at the sites of the duplicated basal body complexes. This is Caltractin from Dunaliella salina (Green alga).